An 874-amino-acid polypeptide reads, in one-letter code: ATP-dependent RNA helicase DDX54 (874 aa).

The tract at residues 1–76 (MAAGRRVGPG…FPTSECVSDV (76 aa)) is disordered. The span at 20–30 (WKKKRLRKRRT) shows a compositional bias: basic residues. The residue at position 30 (Thr-30) is a Phosphothreonine. A phosphoserine mark is found at Ser-33, Ser-38, Ser-40, and Ser-74. Over residues 39 to 50 (DSDDGEFEIQAE) the composition is skewed to acidic residues. The short motif at 95-123 (GGFQSMGLSYPVFKGIMKKGYKVPTPIQR) is the Q motif element. The Helicase ATP-binding domain occupies 126–298 (IPVILDGKDV…RAGLTEPVLI (173 aa)). 139–146 (ARTGSGKT) serves as a coordination point for ATP. Positions 246-249 (DEAD) match the DEAD box motif. The Helicase C-terminal domain maps to 328 to 472 (YLLQNVVRPQ…ARPCEEPSVA (145 aa)). Residues 581-590 (ASSKDPSSQM) are compositionally biased toward polar residues. Positions 581–687 (ASSKDPSSQM…PKDFDSERGL (107 aa)) are disordered. Residues 636 to 645 (TVEGVFTEVV) are compositionally biased toward low complexity. The segment covering 664-685 (ETRQRDQEFYVPYRPKDFDSER) has biased composition (basic and acidic residues). Phosphoserine is present on residues Ser-688 and Ser-690. The interval 712 to 874 (AQNMSRGQQQ…SRKGKMRKRM (163 aa)) is disordered. Polar residues predominate over residues 713-722 (QNMSRGQQQL). 2 stretches are compositionally biased toward basic and acidic residues: residues 737–747 (QEDKKKIKTES) and 755–771 (YKRDLYQKWKQKQKIDD). A phosphoserine mark is found at Ser-774 and Ser-780. The span at 812–823 (MRSELKTKEQIL) shows a compositional bias: basic and acidic residues. Residues 864–874 (PSRKGKMRKRM) show a composition bias toward basic residues.

This sequence belongs to the DEAD box helicase family. DDX54/DBP10 subfamily. As to quaternary structure, interacts in a hormone-dependent manner with nuclear receptors.

The protein resides in the nucleus. Its subcellular location is the nucleolus. It catalyses the reaction ATP + H2O = ADP + phosphate + H(+). Has RNA-dependent ATPase activity. Represses the transcriptional activity of nuclear receptors. This chain is ATP-dependent RNA helicase DDX54 (Ddx54), found in Mus musculus (Mouse).